The primary structure comprises 293 residues: MSASPRLGFVQCISPAGLHRMAYHEWGDPANPRVLVCAHGLTRTGRDFDTVASALCGDYRVVCPDVAGRGRSEWLADANGYVVPQYVSDMVTLIARLNVEKVDWFGTSMGGLIGMGLAGLPKSPVRKLLLNDVGPKLAPSAVERIGAYLGLPVRFKTFEEGLAYLQTISASFGRHTPEQWRELNAAILKPVQGTDGLEWGLHYDPQLAVPFRKSTPEAIAAGEAALWRSFEAIEGPVLVVRGAQSDLLLRETVAEMVARGKHVSSVEVPDVGHAPTFVDPAQIAIAPQFFTGA.

This sequence belongs to the AB hydrolase superfamily.

Its subcellular location is the cytoplasm. The enzyme catalyses (3R)-hydroxybutanoate pentamer + H2O = (3R)-hydroxybutanoate tetramer + (R)-3-hydroxybutanoate + H(+). The catalysed reaction is (3R)-hydroxybutanoate tetramer + H2O = (3R)-hydroxybutanoate trimer + (R)-3-hydroxybutanoate + H(+). It catalyses the reaction (3R)-hydroxybutanoate trimer + H2O = (3R)-hydroxybutanoate dimer + (R)-3-hydroxybutanoate + H(+). It carries out the reaction (3R)-hydroxybutanoate dimer + H2O = 2 (R)-3-hydroxybutanoate + H(+). The enzyme catalyses [(3R)-hydroxybutanoate](n) + H2O = [(3R)-hydroxybutanoate](n-1) + (R)-3-hydroxybutanoate + H(+). Functionally, catalyzes the degradation of various 3-hydroxybutyrate (3HB) oligomers at a high specific activity and artificial amorphous poly(3-hydroxybutyrate) (PHB) at a lower specific activity. Hydrolyzes the 3HB pentamer most efficiently than the tetramer, trimer and dimer. Does not hydrolyze native PHB granules and semicrystalline PHB. Participates in the mobilization of PHB along with other hydrolases. This is 3-hydroxybutyrate-oligomer hydrolase from Cupriavidus necator (strain ATCC 17699 / DSM 428 / KCTC 22496 / NCIMB 10442 / H16 / Stanier 337) (Ralstonia eutropha).